The following is a 261-amino-acid chain: Class II histocompatibility antigen, M beta 1 chain (261 aa).

An N-terminal signal peptide occupies residues 1–18 (MAALWLLLLVLSLHCMGA). The tract at residues 19-112 (GGFVAHVEST…PFWNALTHRT (94 aa)) is beta-1. Residues 19 to 218 (GGFVAHVEST…PGLSPIQTVK (200 aa)) are Lumenal-facing. Intrachain disulfides connect C29–C97, C43–C53, and C135–C192. An N-linked (GlcNAc...) asparagine glycan is attached at N75. Residues 113–207 (RPPSVRVAQT…GTSEPIRGDW (95 aa)) form a beta-2 region. Residues 114–204 (PPSVRVAQTT…QHSGTSEPIR (91 aa)) form the Ig-like C1-type domain. Residues 208 to 218 (TPGLSPIQTVK) are connecting peptide. The chain crosses the membrane as a helical span at residues 219-239 (VSVSAATLGLGFIIFCVGFFR). Over 240–261 (WRKSHSSSYTPLSGSTYPEGRH) the chain is Cytoplasmic. The short motif at 248–251 (YTPL) is the YXXZ motif element.

Belongs to the MHC class II family. As to quaternary structure, heterodimer of an alpha chain (DMA) and a beta chain (DMB). Interacts with MHCII; this interaction mediates rapid selection of high-affinity peptides.

The protein localises to the late endosome membrane. The protein resides in the lysosome membrane. Plays a critical role in catalyzing the release of class II-associated invariant chain peptide (CLIP) from newly synthesized MHC class II molecules and freeing the peptide binding site for acquisition of antigenic peptides. The protein is Class II histocompatibility antigen, M beta 1 chain (H2-DMb1) of Mus musculus (Mouse).